The sequence spans 128 residues: Large ribosomal subunit protein bL12 (128 aa).

The protein belongs to the bacterial ribosomal protein bL12 family. As to quaternary structure, homodimer. Part of the ribosomal stalk of the 50S ribosomal subunit. Forms a multimeric L10(L12)X complex, where L10 forms an elongated spine to which 2 to 4 L12 dimers bind in a sequential fashion. Binds GTP-bound translation factors.

Functionally, forms part of the ribosomal stalk which helps the ribosome interact with GTP-bound translation factors. Is thus essential for accurate translation. The polypeptide is Large ribosomal subunit protein bL12 (Corynebacterium jeikeium (strain K411)).